A 352-amino-acid polypeptide reads, in one-letter code: Protein RecA (352 aa).

66-73 (GPESSGKT) is a binding site for ATP.

This sequence belongs to the RecA family.

Its subcellular location is the cytoplasm. Functionally, can catalyze the hydrolysis of ATP in the presence of single-stranded DNA, the ATP-dependent uptake of single-stranded DNA by duplex DNA, and the ATP-dependent hybridization of homologous single-stranded DNAs. It interacts with LexA causing its activation and leading to its autocatalytic cleavage. This is Protein RecA from Psychrobacter arcticus (strain DSM 17307 / VKM B-2377 / 273-4).